Here is a 63-residue protein sequence, read N- to C-terminus: DNA-directed RNA polymerase 7 kDa subunit (63 aa).

This sequence belongs to the poxviridae DNA-directed RNA polymerase 7 kDa subunit family. As to quaternary structure, the DNA-dependent RNA polymerase used for intermediate and late genes expression consists of eight subunits 147 kDa, 133 kDa, 35 kDa, 30 kDa, 22 kDa, 19 kDa, 18 kDa and 7 kDa totalling more than 500 kDa in mass. The same holoenzyme, with the addition of the transcription-specificity factor RAP94, is used for early gene expression.

It is found in the virion. The catalysed reaction is RNA(n) + a ribonucleoside 5'-triphosphate = RNA(n+1) + diphosphate. In terms of biological role, part of the DNA-dependent RNA polymerase which catalyzes the transcription of viral DNA into RNA using the four ribonucleoside triphosphates as substrates. Responsible for the transcription of early, intermediate and late genes. DNA-dependent RNA polymerase associates with the early transcription factor (ETF) thereby allowing the early genes transcription. Late transcription, and probably also intermediate transcription, require newly synthesized RNA polymerase. In Fowlpox virus (strain NVSL) (FPV), this protein is DNA-directed RNA polymerase 7 kDa subunit (RPO7).